The sequence spans 188 residues: Elongation factor P (188 aa).

Belongs to the elongation factor P family.

It localises to the cytoplasm. The protein operates within protein biosynthesis; polypeptide chain elongation. Functionally, involved in peptide bond synthesis. Stimulates efficient translation and peptide-bond synthesis on native or reconstituted 70S ribosomes in vitro. Probably functions indirectly by altering the affinity of the ribosome for aminoacyl-tRNA, thus increasing their reactivity as acceptors for peptidyl transferase. This Streptomyces avermitilis (strain ATCC 31267 / DSM 46492 / JCM 5070 / NBRC 14893 / NCIMB 12804 / NRRL 8165 / MA-4680) protein is Elongation factor P.